The sequence spans 173 residues: Soluble secreted antigen MPT53 (173 aa).

Residues 1-38 (MSLRLVSPIKAFADGIVAVAIAVVLMFGLANTPRAVAA) form the signal peptide. An intrachain disulfide couples cysteine 73 to cysteine 76.

This sequence belongs to the thioredoxin family.

It is found in the secreted. In terms of biological role, disulfide oxidoreductase that catalyzes the oxidation of reduced, unfolded secreted proteins to form disulfide bonds. Despite a weak homology to thioredoxin this cannot serve as a substrate for thioredoxin reductase. This chain is Soluble secreted antigen MPT53 (mpt53), found in Mycobacterium bovis (strain ATCC BAA-935 / AF2122/97).